Consider the following 60-residue polypeptide: Large ribosomal subunit protein bL32 (60 aa).

Over residues Met-1 to His-20 the composition is skewed to basic residues. Positions Met-1–Met-22 are disordered.

Belongs to the bacterial ribosomal protein bL32 family.

This chain is Large ribosomal subunit protein bL32, found in Psychrobacter arcticus (strain DSM 17307 / VKM B-2377 / 273-4).